A 423-amino-acid polypeptide reads, in one-letter code: CinA-like protein (423 aa).

It belongs to the CinA family.

The sequence is that of CinA-like protein from Prochlorococcus marinus (strain SARG / CCMP1375 / SS120).